The primary structure comprises 662 residues: Eukaryotic peptide chain release factor GTP-binding subunit (662 aa).

Positions 1–220 are disordered; sequence MASNQPNNGE…PATVTEDATD (220 aa). Residues 26-40 are compositionally biased toward low complexity; it reads AKAPTFTPKAAPFIP. The span at 62–89 shows a compositional bias: polar residues; sequence YTGQGQNSNSPHPTKSYQQYYQKPTGNT. The span at 91–102 shows a compositional bias: basic and acidic residues; the sequence is DEDKSRVPDFSK. Residues 122–134 are compositionally biased toward polar residues; that stretch reads GGNTSAPKSTKPI. Low complexity predominate over residues 141-158; sequence TKAPTTTKPAAPAAQSKT. Phosphothreonine is present on Thr182. Over residues 192–213 the composition is skewed to low complexity; the sequence is AKTPSAPAAALKKAAEAAEPAT. Positions 236 to 464 constitute a tr-type G domain; it reads KEHVNIVFIG…LDSMTHLERK (229 aa). Positions 245–252 are G1; it reads GHVDAGKS. 245 to 252 contacts GTP; that stretch reads GHVDAGKS. Positions 301–305 are G2; that stretch reads GKTVE. The interval 322-325 is G3; it reads DAPG. GTP contacts are provided by residues 384–387 and 428–429; these read NKMD and AY. The G4 stretch occupies residues 384 to 387; it reads NKMD. A G5 region spans residues 427-429; that stretch reads SAY. The residue at position 539 (Ser539) is a Phosphoserine.

Belongs to the TRAFAC class translation factor GTPase superfamily. Classic translation factor GTPase family. ERF3 subfamily. Component of the eRF1-eRF3-GTP ternary complex, composed of sup45/eRF1, sup35/eRF3 and GTP.

It localises to the cytoplasm. The enzyme catalyses GTP + H2O = GDP + phosphate + H(+). GTPase component of the eRF1-eRF3-GTP ternary complex, a ternary complex that mediates translation termination in response to the termination codons. Sup35/eRF3 mediates sup45/ERF1 delivery to stop codons: The eRF1-eRF3-GTP complex binds to a stop codon in the ribosomal A-site. GTP hydrolysis by sup35/eRF3 induces a conformational change that leads to its dissociation, permitting sup45/eRF1 to accommodate fully in the A-site. The protein is Eukaryotic peptide chain release factor GTP-binding subunit (sup35) of Schizosaccharomyces pombe (strain 972 / ATCC 24843) (Fission yeast).